The chain runs to 442 residues: 3-ketoacyl-CoA thiolase (442 aa).

C105 acts as the Acyl-thioester intermediate in catalysis. Catalysis depends on proton acceptor residues H398 and C428.

It belongs to the thiolase-like superfamily. Thiolase family. In terms of assembly, heterotetramer of two alpha chains (FadJ) and two beta chains (FadI).

The protein localises to the cytoplasm. It catalyses the reaction an acyl-CoA + acetyl-CoA = a 3-oxoacyl-CoA + CoA. Its pathway is lipid metabolism; fatty acid beta-oxidation. Functionally, catalyzes the final step of fatty acid oxidation in which acetyl-CoA is released and the CoA ester of a fatty acid two carbons shorter is formed. The sequence is that of 3-ketoacyl-CoA thiolase from Aliivibrio fischeri (strain ATCC 700601 / ES114) (Vibrio fischeri).